Reading from the N-terminus, the 205-residue chain is Guanylate kinase (205 aa).

In terms of domain architecture, Guanylate kinase-like spans 7 to 185 (GNIFIISAAS…AEEDLRHIVN (179 aa)). An ATP-binding site is contributed by 14 to 21 (AASGTGKT).

The protein belongs to the guanylate kinase family.

Its subcellular location is the cytoplasm. The catalysed reaction is GMP + ATP = GDP + ADP. Essential for recycling GMP and indirectly, cGMP. This Neisseria meningitidis serogroup A / serotype 4A (strain DSM 15465 / Z2491) protein is Guanylate kinase (gmk).